A 676-amino-acid chain; its full sequence is Mucin-1 (676 aa).

A signal peptide spans 1 to 25 (MTPGIRAPFLLTLLLALVTDPNSVA). The interval 25 to 387 (ALSQDTSSSS…VHNGSLVPTT (363 aa)) is disordered. The Extracellular portion of the chain corresponds to 26 to 582 (LSQDTSSSST…QSWPGVPGWG (557 aa)). 13 tandem repeats follow at residues 40-59 (PVHS…SATT), 60-79 (PGHS…SATT), 80-99 (PGHS…SATT), 100-119 (PVHS…SATT), 120-139 (PVHS…SATT), 140-159 (PVHS…SATT), 160-179 (PVHS…SATT), 180-199 (PVHS…SATT), 200-219 (PVHS…SATT), 220-239 (PVHS…SATT), 240-259 (PVHS…SATT), 260-279 (PVHS…LATT), and 280-299 (PVHS…SATT). A 13 X approximate tandem repeats of P-V-H-S-G-S-S-A-P-P-T-S-S-A-V-N-S-A-T-T region spans residues 40 to 314 (PVHSGSSAPA…SSMQTTEAIS (275 aa)). 3 O-linked (GalNAc...) serine glycosylation sites follow: serine 43, serine 45, and serine 46. O-linked (GalNAc...) threonine glycosylation is present at threonine 50. Residues serine 51, serine 52, and serine 56 are each glycosylated (O-linked (GalNAc...) serine). 2 O-linked (GalNAc...) threonine glycosylation sites follow: threonine 58 and threonine 59. 10 N-linked (GlcNAc...) asparagine glycosylation sites follow: asparagine 291, asparagine 323, asparagine 350, asparagine 380, asparagine 400, asparagine 413, asparagine 435, asparagine 479, asparagine 496, and asparagine 536. The segment covering 404–420 (TMATTTPVGNGTQSSVP) has biased composition (polar residues). The segment at 404–434 (TMATTTPVGNGTQSSVPSRHPVTPTPPAVSS) is disordered. The region spanning 463–570 (GVSFFLLSFH…INVGEMQFPS (108 aa)) is the SEA domain. The chain crosses the membrane as a helical span at residues 583-603 (IALLVLVCILVALAIVYLIAL). Topologically, residues 604–676 (AVCQCRRKNY…PVVATTSANL (73 aa)) are cytoplasmic. Residues cysteine 606 and cysteine 608 are each lipidated (S-palmitoyl cysteine). The tract at residues 614 to 650 (GQLDIFPIQDSYHPMSEYPTYHTHGRYVPPGSTKRSP) is interaction with P53. Tyrosine 625 is subject to Phosphotyrosine; by PDGFR. Positions 625–628 (YHPM) match the Interaction with GRB2 motif. Tyrosine 634 is modified (phosphotyrosine). The interval 636 to 659 (THGRYVPPGSTKRSPYEEVSAGNG) is disordered. Residue tyrosine 640 is modified to Phosphotyrosine; by PDGFR. The required for interaction with GSK3B stretch occupies residues 645–652 (STKRSPYE). The residue at position 646 (threonine 646) is a Phosphothreonine; by PKC/PRKCD. Position 649 is a phosphoserine; by GSK3-beta (serine 649). Tyrosine 651 is modified (phosphotyrosine; by CSK, EGFR and SRC). Residues 651–654 (YEEV) carry the Interaction with SRC and ESR1 motif. The interval 655 to 662 (SAGNGSSL) is required for interaction with beta- and gamma-catenins. At tyrosine 664 the chain carries Phosphotyrosine. Positions 664 to 667 (YTNP) match the Required for interaction with AP1S2 motif.

The alpha subunit forms a tight, non-covalent heterodimeric complex with the proteolytically-released beta-subunit. Binds directly the SH2 domain of GRB2, and forms a MUC1/GRB2/SOS1 complex involved in RAS signaling. The cytoplasmic tail (MUC1CT) interacts with several proteins such as SRC, CTNNB1 and ERBs. Interaction with the SH2 domain of CSK decreases interaction with GSK3B. Interacts with CTNNB1/beta-catenin and JUP/gamma-catenin and promotes cell adhesion. Interaction with JUP/gamma-catenin is induced by heregulin. Binds PRKCD, ERBB2, ERBB3 and ERBB4. Heregulin (HRG) stimulates the interaction with ERBB2 and, to a much lesser extent, the interaction with ERBB3 and ERBB4. Interacts with P53 in response to DNA damage. Interacts with KLF4. Interacts with estrogen receptor alpha/ESR1, through its DNA-binding domain, and stimulates its transcription activity. Binds ADAM17. In terms of processing, probably both N- and O-glycosylated (in repeat region). Post-translationally, proteolytic cleavage in the SEA domain occurs in the endoplasmic reticulum by an autoproteolytic mechanism and requires the full-length SEA domain as well as requiring a Ser, Thr or Cys residue at the P + 1 site. Ectodomain shedding is mediated by ADAM17 in uterine epithelial cells. Dual palmitoylation on cysteine residues in the CQC motif is required for recycling from endosomes back to the plasma membrane. In terms of processing, phosphorylated on tyrosines and serine residues in the C-terminal. Phosphorylation on tyrosines in the C-terminal increases the nuclear location of MUC1 and beta-catenin. Phosphorylation by PKC delta induces binding of MUC1 to beta-catenin/CTNNB1 and thus decreases the formation of the beta-catenin/E-cadherin complex. Src-mediated phosphorylation inhibits interaction with GSK3B. Csk- or Src- or EGFR-mediated phosphorylation on Tyr-651 increases binding to beta-catenin/CTNNB1. GSK3B-mediated phosphorylation on Ser-649 decreases this interaction but restores the formation of the beta-cadherin/E-cadherin complex. On T-cell receptor activation, phosphorylated by LCK. PDGFR-mediated phosphorylation increases nuclear colocalization of MUC1CT and CTNNB1.

It is found in the apical cell membrane. The protein localises to the cell membrane. The protein resides in the cytoplasm. It localises to the nucleus. Functionally, the alpha subunit has cell adhesive properties. Can act both as an adhesion and an anti-adhesion protein. May provide a protective layer on epithelial cells against bacterial and enzyme attack. The beta subunit contains a C-terminal domain which is involved in cell signaling, through phosphorylations and protein-protein interactions. Modulates signaling in ERK, Src and NF-kappaB pathways. In activated T-cells, influences directly or indirectly the Ras/MAPK pathway. Promotes tumor progression. Regulates P53-mediated transcription and determines cell fate in the genotoxic stress response. Binds, together with KLF4, the PE21 promoter element of P53 and represses P53 activity. The protein is Mucin-1 (MUC1) of Mesocricetus auratus (Golden hamster).